The following is a 238-amino-acid chain: MKIFVCEDDQRQREHMVSIIKNYIMIEEKPMELALATNDPYEVLEQSKELNDIGCYFLDIQLEADMNGIKLASEIRKHDPVGNIIFVTSHSELTYLTFVYKVAAMDFIFKDDPSELKMRIIDCLETAHTRLKLLSKESNVDTIELKRGSNSVYVQYDDIMFFESSTKSHRLIAHLDNRQIEFYGNLKELAQLDERFFRCHNSFVINRHNIESIDSKERIVYFKNGENCFASVRNVKKI.

Positions 2-125 constitute a Response regulatory domain; the sequence is KIFVCEDDQR…LKMRIIDCLE (124 aa). Asp59 carries the post-translational modification 4-aspartylphosphate. The 96-residue stretch at 143 to 238 folds into the HTH LytTR-type domain; it reads IELKRGSNSV…FASVRNVKKI (96 aa).

The protein resides in the cytoplasm. In terms of biological role, required for high-level post-exponential phase expression of a series of secreted proteins. In Staphylococcus epidermidis (strain ATCC 35984 / DSM 28319 / BCRC 17069 / CCUG 31568 / BM 3577 / RP62A), this protein is Accessory gene regulator protein A (agrA).